The following is a 310-amino-acid chain: Malate dehydrogenase (310 aa).

NAD(+) contacts are provided by residues 7–12 (GAGNVG) and aspartate 32. 2 residues coordinate substrate: arginine 81 and arginine 87. NAD(+)-binding positions include asparagine 94 and 117–119 (VSN). Asparagine 119 and arginine 150 together coordinate substrate. Histidine 174 (proton acceptor) is an active-site residue.

This sequence belongs to the LDH/MDH superfamily. MDH type 3 family.

The catalysed reaction is (S)-malate + NAD(+) = oxaloacetate + NADH + H(+). Functionally, catalyzes the reversible oxidation of malate to oxaloacetate. This is Malate dehydrogenase from Chlorobium chlorochromatii (strain CaD3).